The following is a 647-amino-acid chain: NADP-dependent malic enzyme, chloroplastic (647 aa).

Residues 1-61 (MMSLNSSSVV…VDGAVKDVNA (61 aa)) constitute a chloroplast transit peptide. The Proton donor role is filled by Tyr-195. Residue Arg-248 coordinates NAD(+). Lys-266 (proton acceptor) is an active-site residue. Residues Glu-338, Asp-339, and Asp-362 each contribute to the a divalent metal cation site. Asp-362 lines the NAD(+) pocket. NADP(+) is bound at residue 391-407 (LFLGAGEAGTGIAELIA). Position 503 (Asn-503) interacts with NAD(+).

It belongs to the malic enzymes family. In terms of assembly, homotetramer. Requires Mg(2+) as cofactor. Mn(2+) is required as a cofactor.

It is found in the plastid. The protein localises to the chloroplast. It catalyses the reaction (S)-malate + NADP(+) = pyruvate + CO2 + NADPH. The enzyme catalyses oxaloacetate + H(+) = pyruvate + CO2. It participates in photosynthesis; C3 acid pathway. In terms of biological role, the chloroplastic ME isoform decarboxylates malate shuttled from neighboring mesophyll cells. The CO(2) released is then refixed by ribulose-bisphosphate carboxylase. This pathway eliminates the photorespiratory loss of CO(2) that occurs in most plants. This chain is NADP-dependent malic enzyme, chloroplastic (MODA), found in Flaveria pringlei.